The sequence spans 396 residues: Argininosuccinate synthase (396 aa).

Position 9–17 (9–17) interacts with ATP; the sequence is AYSGGLDTS. Tyrosine 85 is a binding site for L-citrulline. Glycine 115 is an ATP binding site. L-aspartate is bound by residues threonine 117, asparagine 121, and aspartate 122. Asparagine 121 lines the L-citrulline pocket. L-citrulline-binding residues include arginine 125, serine 173, glutamate 258, and tyrosine 270.

This sequence belongs to the argininosuccinate synthase family. Type 1 subfamily. As to quaternary structure, homotetramer.

It localises to the cytoplasm. It catalyses the reaction L-citrulline + L-aspartate + ATP = 2-(N(omega)-L-arginino)succinate + AMP + diphosphate + H(+). Its pathway is amino-acid biosynthesis; L-arginine biosynthesis; L-arginine from L-ornithine and carbamoyl phosphate: step 2/3. The polypeptide is Argininosuccinate synthase (Streptococcus agalactiae serotype III (strain NEM316)).